The following is a 328-amino-acid chain: Dihydroorotate dehydrogenase (quinone), mitochondrial (328 aa).

The helical transmembrane segment at 21 to 38 (AHGLSIAGLKTGLVTGSA) threads the bilayer. Residues 61 to 65 (AGYDK) and threonine 85 each bind FMN. Position 65 (lysine 65) interacts with substrate. Residue 110–114 (NRLGF) coordinates substrate. Positions 139 and 170 each coordinate FMN. Substrate is bound at residue 170 to 175 (NISSPN). Serine 173 acts as the Nucleophile in catalysis. FMN is bound by residues lysine 215 and serine 243. Position 244-245 (244-245 (NT)) interacts with substrate. Glycine 266 and glycine 295 together coordinate FMN.

It belongs to the dihydroorotate dehydrogenase family. Type 2 subfamily. The cofactor is FMN.

It is found in the mitochondrion inner membrane. It catalyses the reaction (S)-dihydroorotate + a quinone = orotate + a quinol. Its pathway is pyrimidine metabolism; UMP biosynthesis via de novo pathway; orotate from (S)-dihydroorotate (quinone route): step 1/1. Its function is as follows. Catalyzes the conversion of dihydroorotate to orotate with quinone as electron acceptor. This chain is Dihydroorotate dehydrogenase (quinone), mitochondrial (URA1), found in Cyclocybe aegerita (Black poplar mushroom).